Consider the following 836-residue polypeptide: Probable serine/threonine-protein kinase dyrk1 (836 aa).

Residues 99–278 show a composition bias toward low complexity; it reads QQQYQQQHNN…SSNNNNNNKQ (180 aa). The segment at 99–286 is disordered; sequence QQQYQQQHNN…KQSKYNDGYD (188 aa). The Protein kinase domain occupies 304–624; it reads FEIISSLGKG…PLEALQHSFF (321 aa). Residues 310 to 318 and lysine 333 contribute to the ATP site; that span reads LGKGSFGQV. Aspartate 432 functions as the Proton acceptor in the catalytic mechanism. 3 disordered regions span residues 627–697, 718–767, and 785–836; these read DETS…QQQQ, TYSP…INSN, and NIYN…NNNI. Low complexity predominate over residues 630 to 697; the sequence is SQPPQQQSQQ…QQLQQQQQQQ (68 aa). Positions 718–728 are enriched in polar residues; the sequence is TYSPTTQQSNH. Positions 729 to 744 are enriched in basic and acidic residues; that stretch reads KLVDQMKKASMKDKSP. Positions 785 to 816 are enriched in low complexity; it reads NIYNNNNNNNNNNNNNNNNNNSNNYNNSNELS.

The protein belongs to the protein kinase superfamily. CMGC Ser/Thr protein kinase family. MNB/DYRK subfamily.

The catalysed reaction is L-seryl-[protein] + ATP = O-phospho-L-seryl-[protein] + ADP + H(+). It carries out the reaction L-threonyl-[protein] + ATP = O-phospho-L-threonyl-[protein] + ADP + H(+). The enzyme catalyses L-tyrosyl-[protein] + ATP = O-phospho-L-tyrosyl-[protein] + ADP + H(+). The sequence is that of Probable serine/threonine-protein kinase dyrk1 (dyrk1) from Dictyostelium discoideum (Social amoeba).